The chain runs to 248 residues: Pyridoxine 5'-phosphate synthase (248 aa).

Position 12 (N12) interacts with 3-amino-2-oxopropyl phosphate. 14–15 (DH) contacts 1-deoxy-D-xylulose 5-phosphate. R23 is a binding site for 3-amino-2-oxopropyl phosphate. Residue H48 is the Proton acceptor of the active site. 1-deoxy-D-xylulose 5-phosphate contacts are provided by R50 and H55. E75 acts as the Proton acceptor in catalysis. T105 serves as a coordination point for 1-deoxy-D-xylulose 5-phosphate. H196 (proton donor) is an active-site residue. 3-amino-2-oxopropyl phosphate is bound by residues G197 and 218–219 (GH).

It belongs to the PNP synthase family. In terms of assembly, homooctamer; tetramer of dimers.

The protein localises to the cytoplasm. It carries out the reaction 3-amino-2-oxopropyl phosphate + 1-deoxy-D-xylulose 5-phosphate = pyridoxine 5'-phosphate + phosphate + 2 H2O + H(+). Its pathway is cofactor biosynthesis; pyridoxine 5'-phosphate biosynthesis; pyridoxine 5'-phosphate from D-erythrose 4-phosphate: step 5/5. Catalyzes the complicated ring closure reaction between the two acyclic compounds 1-deoxy-D-xylulose-5-phosphate (DXP) and 3-amino-2-oxopropyl phosphate (1-amino-acetone-3-phosphate or AAP) to form pyridoxine 5'-phosphate (PNP) and inorganic phosphate. The sequence is that of Pyridoxine 5'-phosphate synthase from Stutzerimonas stutzeri (strain A1501) (Pseudomonas stutzeri).